The following is a 453-amino-acid chain: Signal recognition particle protein (453 aa).

Residues Gly107 to Thr114, Asp190 to Arg194, and Thr248 to Asp251 contribute to the GTP site.

Belongs to the GTP-binding SRP family. SRP54 subfamily. As to quaternary structure, part of the signal recognition particle protein translocation system, which is composed of SRP and FtsY. SRP is a ribonucleoprotein composed of Ffh and a 4.5S RNA molecule.

It is found in the cytoplasm. It carries out the reaction GTP + H2O = GDP + phosphate + H(+). Functionally, involved in targeting and insertion of nascent membrane proteins into the cytoplasmic membrane. Binds to the hydrophobic signal sequence of the ribosome-nascent chain (RNC) as it emerges from the ribosomes. The SRP-RNC complex is then targeted to the cytoplasmic membrane where it interacts with the SRP receptor FtsY. Interaction with FtsY leads to the transfer of the RNC complex to the Sec translocase for insertion into the membrane, the hydrolysis of GTP by both Ffh and FtsY, and the dissociation of the SRP-FtsY complex into the individual components. The protein is Signal recognition particle protein of Escherichia coli O157:H7.